The sequence spans 78 residues: DNA-directed RNA polymerase subunit omega (78 aa).

It belongs to the RNA polymerase subunit omega family. In terms of assembly, in cyanobacteria the RNAP catalytic core is composed of 2 alpha, 1 beta, 1 beta', 1 gamma and 1 omega subunit. When a sigma factor is associated with the core the holoenzyme is formed, which can initiate transcription.

It catalyses the reaction RNA(n) + a ribonucleoside 5'-triphosphate = RNA(n+1) + diphosphate. Functionally, promotes RNA polymerase assembly. Latches the N- and C-terminal regions of the beta' subunit thereby facilitating its interaction with the beta and alpha subunits. This is DNA-directed RNA polymerase subunit omega from Nostoc punctiforme (strain ATCC 29133 / PCC 73102).